Consider the following 202-residue polypeptide: Tetranectin (202 aa).

The N-terminal stretch at 1–21 is a signal peptide; it reads MELWGAYLLLCLFSLLTQVTT. A glycan (O-linked (GalNAc...) threonine) is linked at Thr-25. 3 disulfides stabilise this stretch: Cys-71–Cys-81, Cys-98–Cys-197, and Cys-173–Cys-189. The region spanning 77–198 is the C-type lectin domain; that stretch reads VHMKCFLAFT…CRDQLPYICQ (122 aa).

Homotrimer. Found in plasma.

The protein localises to the secreted. Its function is as follows. Tetranectin binds to plasminogen and to isolated kringle 4. May be involved in the packaging of molecules destined for exocytosis. Plays a role in retinal function. This is Tetranectin (CLEC3B) from Homo sapiens (Human).